The primary structure comprises 120 residues: Large ribosomal subunit protein bL17 (120 aa).

It belongs to the bacterial ribosomal protein bL17 family. As to quaternary structure, part of the 50S ribosomal subunit. Contacts protein L32.

This chain is Large ribosomal subunit protein bL17, found in Bacillus velezensis (strain DSM 23117 / BGSC 10A6 / LMG 26770 / FZB42) (Bacillus amyloliquefaciens subsp. plantarum).